Reading from the N-terminus, the 732-residue chain is uncharacterized protein (732 aa).

Residues 163–390 (YYTINELNYL…FGIVAKKKYE (228 aa)) enclose the TR mART core domain. Active-site residues include Arg-285, Ser-309, and Glu-354.

This is an uncharacterized protein from Acanthamoeba polyphaga mimivirus (APMV).